Reading from the N-terminus, the 467-residue chain is ATP-dependent protease ATPase subunit HslU (467 aa).

ATP-binding positions include Ile18, 60 to 65 (GVGKTE), Asp280, Glu345, and Arg417.

This sequence belongs to the ClpX chaperone family. HslU subfamily. A double ring-shaped homohexamer of HslV is capped on each side by a ring-shaped HslU homohexamer. The assembly of the HslU/HslV complex is dependent on binding of ATP.

The protein resides in the cytoplasm. Its function is as follows. ATPase subunit of a proteasome-like degradation complex; this subunit has chaperone activity. The binding of ATP and its subsequent hydrolysis by HslU are essential for unfolding of protein substrates subsequently hydrolyzed by HslV. HslU recognizes the N-terminal part of its protein substrates and unfolds these before they are guided to HslV for hydrolysis. The polypeptide is ATP-dependent protease ATPase subunit HslU (Lactobacillus helveticus (strain DPC 4571)).